We begin with the raw amino-acid sequence, 250 residues long: Large ribosomal subunit protein uL13c (250 aa).

Residues 1-47 (MATMACASSLTFPSAQTQKSFFGTNVKQTPVLSFPRPTVAAAVAVSA) constitute a chloroplast transit peptide.

As to quaternary structure, component of the chloroplast large ribosomal subunit (LSU). Mature 70S chloroplast ribosomes of higher plants consist of a small (30S) and a large (50S) subunit. The 30S small subunit contains 1 molecule of ribosomal RNA (16S rRNA) and 24 different proteins. The 50S large subunit contains 3 rRNA molecules (23S, 5S and 4.5S rRNA) and 33 different proteins.

It localises to the plastid. The protein resides in the chloroplast. Component of the chloroplast ribosome (chloro-ribosome), a dedicated translation machinery responsible for the synthesis of chloroplast genome-encoded proteins, including proteins of the transcription and translation machinery and components of the photosynthetic apparatus. The polypeptide is Large ribosomal subunit protein uL13c (RPL13) (Spinacia oleracea (Spinach)).